The sequence spans 299 residues: Bifunctional protein FolD 2 (299 aa).

The protein belongs to the tetrahydrofolate dehydrogenase/cyclohydrolase family. In terms of assembly, homodimer.

It carries out the reaction (6R)-5,10-methylene-5,6,7,8-tetrahydrofolate + NADP(+) = (6R)-5,10-methenyltetrahydrofolate + NADPH. The enzyme catalyses (6R)-5,10-methenyltetrahydrofolate + H2O = (6R)-10-formyltetrahydrofolate + H(+). It participates in one-carbon metabolism; tetrahydrofolate interconversion. Catalyzes the oxidation of 5,10-methylenetetrahydrofolate to 5,10-methenyltetrahydrofolate and then the hydrolysis of 5,10-methenyltetrahydrofolate to 10-formyltetrahydrofolate. In Arabidopsis thaliana (Mouse-ear cress), this protein is Bifunctional protein FolD 2 (FOLD2).